The following is a 116-amino-acid chain: Large ribosomal subunit protein uL18 (116 aa).

Belongs to the universal ribosomal protein uL18 family. As to quaternary structure, part of the 50S ribosomal subunit; part of the 5S rRNA/L5/L18/L25 subcomplex. Contacts the 5S and 23S rRNAs.

Functionally, this is one of the proteins that bind and probably mediate the attachment of the 5S RNA into the large ribosomal subunit, where it forms part of the central protuberance. The chain is Large ribosomal subunit protein uL18 from Pseudomonas aeruginosa (strain UCBPP-PA14).